We begin with the raw amino-acid sequence, 216 residues long: Sporozoite antigen (216 aa).

The segment at 194-216 (QQQQPSSYGAPPASSQQPSGFFW) is disordered.

The protein is Sporozoite antigen of Eimeria tenella (Coccidian parasite).